The chain runs to 403 residues: MTESTFPQYPRLVLSKGREKSLLRRHPWVFSGAVSRLEGKANLGETIDIVDHQGKWLARGAWSPASQIRARVWTFDKTESIDIAFFTRRLRQAQQWRDWLAKKDGLDSYRLIAGESDGLPGVTIDRFGHFLVLQLLSAGAEYQRAALISALQTCYPDCAIYDRSDVAVRKKEGMALTQGPVTGELPPALLPIEEHGMKLLVDIQGGHKTGYYLDQRDSRLVTRRYVENQRVLNCFSYTGGFAVSALMGGCRQVVSVDTSQDALDIARQNVELNQLDLSKAEFVRDDVFKLLRAYREHGEKFDVIIMDPPKFVENKSQLMGACRGYKDINMLAIQLLNPGGILLTFSCSGLMTSDLFQKIIADAAIDAGRDVQFIEQFRQAADHPVIATYPEGLYLKGFACRVM.

One can recognise a PUA domain in the interval tyrosine 9–arginine 88.

This sequence belongs to the methyltransferase superfamily. RlmI family.

The protein resides in the cytoplasm. The catalysed reaction is cytidine(1962) in 23S rRNA + S-adenosyl-L-methionine = 5-methylcytidine(1962) in 23S rRNA + S-adenosyl-L-homocysteine + H(+). Specifically methylates the cytosine at position 1962 (m5C1962) of 23S rRNA. The sequence is that of Ribosomal RNA large subunit methyltransferase I from Salmonella typhi.